Reading from the N-terminus, the 267-residue chain is Palmitoyltransferase ZDHHC12 (267 aa).

Over 1 to 9 the chain is Cytoplasmic; it reads MALWPPLNS. Residues 10–30 traverse the membrane as a helical segment; sequence GMLVRTGHTVLTWGITLVLFL. The Lumenal portion of the chain corresponds to 31-43; sequence HDTELRQWEEQGE. A helical membrane pass occupies residues 44 to 64; it reads LLLPLTFLLLVLSSLLLYLAV. Topologically, residues 65-140 are cytoplasmic; it reads SLMDPGYVTT…ENCVGERNHP (76 aa). Residues 97–147 form the DHHC domain; the sequence is RRCRHCLVLQPLRARHCRDCRRCVRRYDHHCPWMENCVGERNHPLFVAYLA. Cys127 functions as the S-palmitoyl cysteine intermediate in the catalytic mechanism. The chain crosses the membrane as a helical span at residues 141 to 161; sequence LFVAYLALQLVVLLWGLCLAW. Residues 162–178 lie on the Lumenal side of the membrane; the sequence is SGLQFFQPWGLWLRSTG. A helical membrane pass occupies residues 179–199; it reads LLFTTFLLLSFFALVVALLLA. At 200–267 the chain is on the cytoplasmic side; that stretch reads SHLYLVARNT…EEEEGSSQVV (68 aa).

This sequence belongs to the DHHC palmitoyltransferase family.

Its subcellular location is the golgi apparatus membrane. It is found in the endoplasmic reticulum membrane. It catalyses the reaction L-cysteinyl-[protein] + hexadecanoyl-CoA = S-hexadecanoyl-L-cysteinyl-[protein] + CoA. Its function is as follows. Palmitoyltransferase that catalyzes the addition of palmitate onto various protein substrates. Has a palmitoyltransferase activity toward gephyrin/GPHN, regulating its clustering at synapses and its function in gamma-aminobutyric acid receptor clustering. Thereby, indirectly regulates GABAergic synaptic transmission. Negatively regulates NLRP3-driven inflammation. Catalyzes NLRP3 palmitoylation, leading to its degradation via the chaperone-mediated autophagy (CMA) process. This Mus musculus (Mouse) protein is Palmitoyltransferase ZDHHC12.